We begin with the raw amino-acid sequence, 191 residues long: MSQKITLIKDKVLSDNYFILRNITYDLTRKNGDVIRHKREVYDRGNGATILLYNREKQTVVLIRQFRVATWVNGNESGQLIETCAGLLDNDEPEACIRKEAIEETGYEVGEVRKLFELYMSPGGVTELIHFFIAEYSDSQRANAGGGVEDEDIEVLELPLTQALAMIKTGEIRDGKTVLLLNYLHSSSLIY.

GDP-alpha-D-mannose is bound by residues tyrosine 17, 38-40 (KRE), arginine 67, and 85-87 (AGL). The 138-residue stretch at 43–180 (DRGNGATILL…EIRDGKTVLL (138 aa)) folds into the Nudix hydrolase domain. Mg(2+) is bound by residues alanine 85, glutamate 100, and glutamate 104. A Nudix box motif is present at residues 86-106 (GLLDNDEPEACIRKEAIEETG). Residues glutamate 104, glutamate 127, 150–151 (DE), and lysine 176 contribute to the GDP-alpha-D-mannose site. Glutamate 151 contacts Mg(2+).

It belongs to the Nudix hydrolase family. NudK subfamily. In terms of assembly, homodimer. It depends on Mg(2+) as a cofactor.

It carries out the reaction GDP-alpha-D-mannose + H2O = alpha-D-mannose 1-phosphate + GMP + 2 H(+). Its function is as follows. Nucleoside diphosphate sugar hydrolase that hydrolyzes GDP-mannose as its preferred substrate, yielding GMP and mannose-1-phosphate. In Citrobacter koseri (strain ATCC BAA-895 / CDC 4225-83 / SGSC4696), this protein is GDP-mannose pyrophosphatase (nudK).